The chain runs to 256 residues: Small ribosomal subunit protein uS3 (256 aa).

Residues 39–121 form the KH type-2 domain; the sequence is IRTYLTKQLS…TIRINVVEVT (83 aa). Positions 227–256 are disordered; sequence RHEQKFPLQQPKRRQQRRRPTFEDRSAQEA. Over residues 246–256 the composition is skewed to basic and acidic residues; it reads PTFEDRSAQEA.

This sequence belongs to the universal ribosomal protein uS3 family. As to quaternary structure, part of the 30S ribosomal subunit. Forms a tight complex with proteins S10 and S14.

Functionally, binds the lower part of the 30S subunit head. Binds mRNA in the 70S ribosome, positioning it for translation. In Synechococcus sp. (strain JA-2-3B'a(2-13)) (Cyanobacteria bacterium Yellowstone B-Prime), this protein is Small ribosomal subunit protein uS3.